The primary structure comprises 1523 residues: MEAESGSSTSQDSLASLTAGDVLVRSTGVRGVKGAAGAGGRNSAAVSVTKLREALPSRQAAGVALSRGETPCEPPVPSSGASNGRVTGVTACSAAPGVWNAKGHPEHLLLVADPVEATSVPQMVYPKEAAVNPKEADRSLQPEYSRRPKDDVLISRYPTGQKEALRAVLKQKTRSAPVFKEVKVQLLGNASPERKESVGQDPILTHREADSATTIAAATAAAIATTAPLLKVQNDLQAKVNCVSTLLHKLQETDKQLQRVAEQQTNTKTQHEKPHCHERVSELEKQMNAFMLQRIHHLEKLQEHQMNIQSHFISSAVNMGGLQQTHMPSSGLLTKQSEKAEEQLLNNGISSSQKNFFPSSGLPTQGDGRHLEHILNPQAAPWGQMESSEKTMLTNDKMSWHSEIERPTALQTDSCPAYENSSQNCNSIEKTVKKADDLLQVLGQLRKEMHDMLQEASSWKSDMNDLIKSKPATIASDPPEYNHLVKPSVLQNVKAPNSILSDAKRVLREVQSRKKVLEENLEAVLRAKGGGAMSAFINALTTNRDALEKIRIRKAVDERIKAISAEIQAEMARNDMEQVKYDQKVPWIKRAQNIKAMKNSKEIKAKTQKIQGCSTKKPLSAAKSLRNHVEDNISKEGFRTYFSSESLQRNRKGTDEPMSGCAMVQNEEYLSQIYGKPIYQGHRSTLKKAPYLRFNSPSPKSKLQRPRVIEYVRGTKVKSAGTQTCSRAQKAVISSKKQHPLYALAQENQYFFSPNRDVPADCGPLEGHLIPMAVPLGQTQINDISVQPAGVVMCKPHPVTVTTSIPQVPPKPPTEVKKPNVAVIEMRSEKKDPPQLSVQVLPNVDIDSISGGSVSVNHVLPEPKPARCPADAVIQAPEDIQSEEEDVKFPGTNFTDVTDVVQDQEEERDEIPEFTEPLLEINGHFRVAEPTYNGPSFPPVASAPQQSCDVLDEWIERRETIENRLINWVEQEIMAKIISEMYPVQRETVPSVSTSEGEDSETVTSDIVEAAGGGGFQLFIDAGVPVDSEMISHLVNEVLSETIATMLGNRQAQEAVPATNLLPSTTAVMEPLVPTPLPTPQATPPQTPPSEKEMPPVQTPESSPSITELSGDVREQEKMKEAGSDIPAAVSRVGTPVITPISTPPEIITPSPPASEAAKMENPAPLNPWDDAELPLEEEKPSPLAEETFNPKAVEMSVANDEEPEALILPSWQSSPKPFQSLPCEPEAPSAAPTDSSEQSTQESSLTPTETETADRPISEGEVLFSCDQMLAAREGGLSFPNLTESLTSTLQDANEMDYDPPSEGQVVRRSHKGYHRDPVLALLAKLNQAPVAVQEGGYHLEDSDSSVGELSEGQRPRLTRAAERILMGHPVDIDHATARASEDRPYQGSRSPSPGQLTHPAEILGDADTSHGPMLVAELESQPISNPVLQAAQPSCRVASLPKGPSQEESQGDARVVRPRVVHVRRKSEEMQEEGEGVVPHFHSHVSAERMSVKLPSMNIDDQTQSLSSIHGDSDSSGADTF.

Over residues 1 to 16 (MEAESGSSTSQDSLAS) the composition is skewed to polar residues. 2 disordered regions span residues 1 to 20 (MEAESGSSTSQDSLASLTAG) and 57 to 84 (SRQAAGVALSRGETPCEPPVPSSGASNG). Coiled-coil stretches lie at residues 428–466 (IEKTVKKADDLLQVLGQLRKEMHDMLQEASSWKSDMNDL) and 499–528 (ILSDAKRVLREVQSRKKVLEENLEAVLRAK). Residues 498–585 (SILSDAKRVL…MEQVKYDQKV (88 aa)) are required for centrosomal localization. Disordered regions lie at residues 1070–1112 (EPLV…LSGD), 1137–1262 (VITP…SEGE), 1294–1313 (ANEMDYDPPSEGQVVRRSHK), 1373–1410 (DIDHATARASEDRPYQGSRSPSPGQLTHPAEILGDADT), and 1498–1523 (SMNIDDQTQSLSSIHGDSDSSGADTF). Residues 1073-1088 (VPTPLPTPQATPPQTP) show a composition bias toward pro residues. Positions 1099-1108 (TPESSPSITE) are enriched in polar residues. 2 stretches are compositionally biased toward low complexity: residues 1137 to 1149 (VITPISTPPEIIT) and 1236 to 1251 (SSEQSTQESSLTPTET). Basic and acidic residues predominate over residues 1373–1386 (DIDHATARASEDRP). The span at 1507 to 1523 (SLSSIHGDSDSSGADTF) shows a compositional bias: low complexity.

It belongs to the TALPID3 family. As to expression, ubiquitously expressed.

It localises to the cytoplasm. It is found in the cytoskeleton. The protein resides in the microtubule organizing center. Its subcellular location is the centrosome. Its function is as follows. Required for ciliogenesis and sonic hedgehog/SHH signaling. Independently, involved in regulation of cell intracellular organization. Involved in regulation of cell polarity. This Gallus gallus (Chicken) protein is TALPID3 protein (TALPID3).